Consider the following 117-residue polypeptide: Toxin CSTX-12 (117 aa).

A signal peptide spans 1 to 20 (MKVLVICAVLFLTIFSNSSA). The propeptide occupies 21–47 (ETEDDFLEDESFEADDVIPFLAREQVR). 4 cysteine pairs are disulfide-bonded: cysteine 50-cysteine 65, cysteine 57-cysteine 74, cysteine 64-cysteine 95, and cysteine 76-cysteine 93. Positions 82–87 (RSDTAR) are excised as a propeptide. Alanine 116 carries the post-translational modification Alanine amide.

This sequence belongs to the neurotoxin 19 (CSTX) family. 12 subfamily. In terms of assembly, heterodimer of A and B chains; disulfide-linked. Interacts with CSTX-1 (AC P81694), and with CSTX-9 (AC P58604). As to expression, expressed by the venom gland.

Its subcellular location is the secreted. It localises to the target cell membrane. Synergistic toxin that induces or increases a cytolytic effect when combined with CSTX-1 (AC P81694) or CSTX-9 (AC P58604). When alone, has a weak insecticidal activity, with an unknown molecular target. This is Toxin CSTX-12 from Cupiennius salei (American wandering spider).